Consider the following 283-residue polypeptide: ATP synthase gamma chain (283 aa).

Belongs to the ATPase gamma chain family. In terms of assembly, F-type ATPases have 2 components, CF(1) - the catalytic core - and CF(0) - the membrane proton channel. CF(1) has five subunits: alpha(3), beta(3), gamma(1), delta(1), epsilon(1). CF(0) has three main subunits: a, b and c.

The protein resides in the cell membrane. Functionally, produces ATP from ADP in the presence of a proton gradient across the membrane. The gamma chain is believed to be important in regulating ATPase activity and the flow of protons through the CF(0) complex. The sequence is that of ATP synthase gamma chain from Exiguobacterium sibiricum (strain DSM 17290 / CCUG 55495 / CIP 109462 / JCM 13490 / 255-15).